We begin with the raw amino-acid sequence, 275 residues long: Holocytochrome c-type synthase (275 aa).

Disordered stretches follow at residues 1-59 (MGLS…KTNS) and 83-102 (KENLDPSNLMPPPNQTPAPD). Gly-2 carries the N-myristoyl glycine lipid modification. The span at 9 to 28 (AASTVQTSTPAASDHQTAAP) shows a compositional bias: polar residues. 2 HRM repeats span residues 31 to 36 (GCPMHE) and 41 to 46 (GCPVSA). Residues 48-59 (PSDSTCGSKTNS) show a composition bias toward polar residues. Residues 91–102 (LMPPPNQTPAPD) are compositionally biased toward pro residues.

The protein belongs to the cytochrome c-type heme lyase family.

The protein resides in the mitochondrion inner membrane. Its subcellular location is the membrane. The enzyme catalyses holo-[cytochrome c] = apo-[cytochrome c] + heme b. Lyase that catalyzes the covalent linking of the heme group to the cytochrome C apoprotein to produce the mature functional cytochrome. The polypeptide is Holocytochrome c-type synthase (Bos taurus (Bovine)).